A 175-amino-acid polypeptide reads, in one-letter code: Translation initiation factor IF-3 (175 aa).

The protein belongs to the IF-3 family. Monomer.

The protein localises to the cytoplasm. Functionally, IF-3 binds to the 30S ribosomal subunit and shifts the equilibrium between 70S ribosomes and their 50S and 30S subunits in favor of the free subunits, thus enhancing the availability of 30S subunits on which protein synthesis initiation begins. This is Translation initiation factor IF-3 from Chlamydia trachomatis serovar D (strain ATCC VR-885 / DSM 19411 / UW-3/Cx).